Here is a 608-residue protein sequence, read N- to C-terminus: Kelch-like protein 10 (608 aa).

Residues 39 to 106 (CDVVIKVNGF…AYTRTVPITP (68 aa)) enclose the BTB domain. 6 Kelch repeats span residues 292-339 (ILFA…YLKG), 340-386 (YVYI…VLSN), 388-433 (IYAM…TLYG), 434-480 (KVYI…AYGE), 481-527 (HVYA…VVDD), and 529-574 (LFVV…VVPG). Residue Ser501 is modified to Phosphoserine.

As to quaternary structure, self-associates. Interacts with CUL3; indicative for the participation in an E3 ubiquitin ligase complex. As to expression, testis specific.

The protein resides in the cytoplasm. The protein operates within protein modification; protein ubiquitination. May be a substrate-specific adapter of a CUL3-based E3 ubiquitin-protein ligase complex which mediates the ubiquitination and subsequent proteasomal degradation of target proteins during spermatogenesis. Required for male fertility. The protein is Kelch-like protein 10 (Klhl10) of Mus musculus (Mouse).